A 129-amino-acid polypeptide reads, in one-letter code: ATP synthase epsilon chain (129 aa).

It belongs to the ATPase epsilon chain family. F-type ATPases have 2 components, CF(1) - the catalytic core - and CF(0) - the membrane proton channel. CF(1) has five subunits: alpha(3), beta(3), gamma(1), delta(1), epsilon(1). CF(0) has three main subunits: a, b and c.

Its subcellular location is the cell inner membrane. Produces ATP from ADP in the presence of a proton gradient across the membrane. This Campylobacter concisus (strain 13826) protein is ATP synthase epsilon chain.